We begin with the raw amino-acid sequence, 443 residues long: Threonine/serine transporter TdcC (443 aa).

11 consecutive transmembrane segments (helical) span residues 22–42, 44–64, 97–117, 140–160, 163–183, 207–227, 259–279, 319–339, 366–386, 389–409, and 423–443; these read TTWTLGLFGTAIGAGVLFFPI, AGFGGLIPILLMLVLAYPIAF, GVVITFLYFFAICPLLWIYGV, FVALFLLLLMAFVIWFGKDLM, VMSYLVWPFIASLVLISLSLI, ILVTVWLGISIMVFSFNFSPI, ASMLMVAVVMFFAFSCLFTLS, ASIIALVAIFKSFFGHYLGTL, ISMIFIMGSTWVVAYANPNIL, IEAMGAPIIASLLCLLPMYAI, and DNVFVTLIGLLTILNIVYKLF.

It belongs to the amino acid/polyamine transporter 2 family. SdaC/TdcC subfamily.

The protein localises to the cell inner membrane. The catalysed reaction is L-threonine(in) + H(+)(in) = L-threonine(out) + H(+)(out). It carries out the reaction L-serine(in) + H(+)(in) = L-serine(out) + H(+)(out). Its function is as follows. Involved in the import of threonine and serine into the cell, with the concomitant import of a proton (symport system). This chain is Threonine/serine transporter TdcC, found in Salmonella newport (strain SL254).